Reading from the N-terminus, the 215-residue chain is Extracellular small neutral protease (215 aa).

The first 30 residues, 1 to 30, serve as a signal peptide directing secretion; the sequence is MRMTRAASALAGLGLAVAAALGSVAPASAA. Threonine 152 is a Ca(2+) binding site. Histidine 157 contacts Zn(2+). Glutamate 158 is a catalytic residue. 2 residues coordinate Zn(2+): histidine 161 and aspartate 167. Cysteine 173 and cysteine 186 are oxidised to a cystine.

It belongs to the peptidase M7 family. Requires Zn(2+) as cofactor.

The protein localises to the secreted. The catalysed reaction is Hydrolyzes proteins with a preference for Tyr or Phe in the P1' position. Has no action on amino-acid p-nitroanilides.. The sequence is that of Extracellular small neutral protease (snpA) from Streptomyces coelicolor.